The chain runs to 534 residues: Protoheme IX farnesyltransferase (534 aa).

The unknown stretch occupies residues 1-251 (MRREHARAIL…VLLEGKPSLL (251 aa)). 15 consecutive transmembrane segments (helical) span residues 17 to 37 (PWLL…GGIV), 39 to 59 (ALTG…ALAI), 83 to 103 (YLTL…FGAI), 128 to 148 (LALA…ALAV), 163 to 183 (VAWA…QVLL), 197 to 217 (LMHL…TTLA), 261 to 281 (GVIS…PAGI), 284 to 304 (LSLV…SHSI), 339 to 359 (IALG…LAAI), 360 to 380 (LALA…KRTS), 384 to 404 (IVIG…AVTG), 411 to 431 (LLLW…LALI), 457 to 477 (IVIY…LGML), 479 to 499 (WAYL…ALKL), and 508 to 528 (AWAL…AMAV). The segment at 252–530 (KDYISLTKPG…ILFVAMAVDR (279 aa)) is protoheme IX prenyltransferase.

This sequence in the C-terminal section; belongs to the UbiA prenyltransferase family. Protoheme IX farnesyltransferase subfamily.

It is found in the cell membrane. The enzyme catalyses heme b + (2E,6E)-farnesyl diphosphate + H2O = Fe(II)-heme o + diphosphate. It participates in porphyrin-containing compound metabolism; heme O biosynthesis; heme O from protoheme: step 1/1. Functionally, converts heme B (protoheme IX) to heme O by substitution of the vinyl group on carbon 2 of heme B porphyrin ring with a hydroxyethyl farnesyl side group. The sequence is that of Protoheme IX farnesyltransferase (ctaB) from Roseiflexus sp. (strain RS-1).